The sequence spans 373 residues: Chaperone protein DnaJ (373 aa).

A J domain is found at 5–70 (DYYEVLGVAK…QKRAAYDRYG (66 aa)). The segment at 133 to 211 (GFDTEIRVPS…CDGVGRTRRN (79 aa)) adopts a CR-type zinc-finger fold. Zn(2+)-binding residues include C146, C149, C163, C166, C185, C188, C199, and C202. CXXCXGXG motif repeat units lie at residues 146-153 (CDTCHGSG), 163-170 (CRTCGGSG), 185-192 (CPTCHGTG), and 199-206 (CPSCDGVG).

This sequence belongs to the DnaJ family. In terms of assembly, homodimer. Zn(2+) is required as a cofactor.

The protein localises to the cytoplasm. In terms of biological role, participates actively in the response to hyperosmotic and heat shock by preventing the aggregation of stress-denatured proteins and by disaggregating proteins, also in an autonomous, DnaK-independent fashion. Unfolded proteins bind initially to DnaJ; upon interaction with the DnaJ-bound protein, DnaK hydrolyzes its bound ATP, resulting in the formation of a stable complex. GrpE releases ADP from DnaK; ATP binding to DnaK triggers the release of the substrate protein, thus completing the reaction cycle. Several rounds of ATP-dependent interactions between DnaJ, DnaK and GrpE are required for fully efficient folding. Also involved, together with DnaK and GrpE, in the DNA replication of plasmids through activation of initiation proteins. The polypeptide is Chaperone protein DnaJ (Bordetella bronchiseptica (strain ATCC BAA-588 / NCTC 13252 / RB50) (Alcaligenes bronchisepticus)).